The chain runs to 352 residues: N-acetyl-gamma-glutamyl-phosphate reductase (352 aa).

Residue Cys155 is part of the active site.

Belongs to the NAGSA dehydrogenase family. Type 1 subfamily.

Its subcellular location is the cytoplasm. The catalysed reaction is N-acetyl-L-glutamate 5-semialdehyde + phosphate + NADP(+) = N-acetyl-L-glutamyl 5-phosphate + NADPH + H(+). It functions in the pathway amino-acid biosynthesis; L-arginine biosynthesis; N(2)-acetyl-L-ornithine from L-glutamate: step 3/4. In terms of biological role, catalyzes the NADPH-dependent reduction of N-acetyl-5-glutamyl phosphate to yield N-acetyl-L-glutamate 5-semialdehyde. The protein is N-acetyl-gamma-glutamyl-phosphate reductase of Cyanothece sp. (strain PCC 7425 / ATCC 29141).